The chain runs to 90 residues: Darcynin 1 (90 aa).

Belongs to the darcynin family.

This chain is Darcynin 1, found in Acinetobacter baumannii (strain ATCC 17978 / DSM 105126 / CIP 53.77 / LMG 1025 / NCDC KC755 / 5377).